Consider the following 40-residue polypeptide: Peroxisomal LYS1 stabilizing protein 1 (40 aa).

A compositionally biased stretch (polar residues) spans 1-10; the sequence is MTAKTKQSWN. The disordered stretch occupies residues 1–20; sequence MTAKTKQSWNKGIWENGKQG.

It is found in the cytoplasm. Its subcellular location is the cytosol. The protein localises to the peroxisome matrix. In terms of biological role, modulates the lysine biosynthesis pathway, possibly by stabilizing the lysine biosynthesis LYS1 protein in lysine-deplete conditions. In Saccharomyces cerevisiae (strain ATCC 204508 / S288c) (Baker's yeast), this protein is Peroxisomal LYS1 stabilizing protein 1.